The sequence spans 419 residues: L-rhamnose isomerase (419 aa).

3 residues coordinate Mn(2+): His-262, Asp-294, and Asp-296.

Belongs to the rhamnose isomerase family. In terms of assembly, homotetramer. It depends on Mn(2+) as a cofactor.

The protein localises to the cytoplasm. The catalysed reaction is L-rhamnopyranose = L-rhamnulose. Its pathway is carbohydrate degradation; L-rhamnose degradation; glycerone phosphate from L-rhamnose: step 1/3. Functionally, catalyzes the interconversion of L-rhamnose and L-rhamnulose. The polypeptide is L-rhamnose isomerase (Escherichia coli O127:H6 (strain E2348/69 / EPEC)).